We begin with the raw amino-acid sequence, 369 residues long: MFNVRQLIATTLLLSCAFAAQAERLKDIASISGVRSNQLIGYGLVVGLNGTGDQTTQTPFTLQTFNNMLSQFGIKVPAGSGNVQLKNVAAVSVHADLPPFAKPGQVVDITVSSIGNSKSLRGGSLLMTPLKGIDGNVYAIAQGNLVVGGFDAEGRDGSKITVNVPSAGRIPGGASVERAVPSGFNQGNTLTLNLNRPDFTTAKRIVDKVNDLLGPGVAQAVDGGSVRVSAPMDPSQRVDYLSILENLEIDPGQAVAKVIINSRTGTIVIGQNVKVSPAAVTHGSLTVTITEDPIVSQPGAFSNGQTAVVPRSRVNAEQEAKPMFKFGPGTTLDEIVRAVNQVGAAPGDLMAILEALKQAGALQADLIVI.

The N-terminal stretch at 1-22 (MFNVRQLIATTLLLSCAFAAQA) is a signal peptide.

Belongs to the FlgI family. The basal body constitutes a major portion of the flagellar organelle and consists of four rings (L,P,S, and M) mounted on a central rod.

It is found in the periplasm. The protein localises to the bacterial flagellum basal body. Assembles around the rod to form the L-ring and probably protects the motor/basal body from shearing forces during rotation. This is Flagellar P-ring protein from Pseudomonas putida (strain ATCC 47054 / DSM 6125 / CFBP 8728 / NCIMB 11950 / KT2440).